We begin with the raw amino-acid sequence, 256 residues long: Uridylate kinase (256 aa).

10–13 contacts ATP; that stretch reads KLSG. Residue Gly-52 coordinates UMP. Gly-53 and Arg-57 together coordinate ATP. Residues Asp-72 and 134–141 contribute to the UMP site; that span reads NGQPFLTT. ATP is bound by residues Tyr-168 and Asp-171.

Belongs to the UMP kinase family. Homohexamer.

It is found in the cytoplasm. The catalysed reaction is UMP + ATP = UDP + ADP. It participates in pyrimidine metabolism; CTP biosynthesis via de novo pathway; UDP from UMP (UMPK route): step 1/1. With respect to regulation, inhibited by UTP. Functionally, catalyzes the reversible phosphorylation of UMP to UDP. In Frankia alni (strain DSM 45986 / CECT 9034 / ACN14a), this protein is Uridylate kinase.